Here is a 462-residue protein sequence, read N- to C-terminus: Metal cation symporter ZIP8 (462 aa).

An N-terminal signal peptide occupies residues Met-1–Gly-19. Over His-20–Gly-132 the chain is Extracellular. Residues Asn-40, Asn-88, and Asn-96 are each glycosylated (N-linked (GlcNAc...) asparagine). Residues Phe-133–Ile-153 traverse the membrane as a helical segment. The Cytoplasmic portion of the chain corresponds to Lys-154 to Lys-160. Residues Ile-161 to Leu-181 traverse the membrane as a helical segment. Residues Ile-182 to Lys-191 are Extracellular-facing. A helical transmembrane segment spans residues Ile-192 to Val-212. Residues Glu-213–Ala-367 are Cytoplasmic-facing. The XEXPHE-motif signature appears at Glu-345 to Glu-350. A helical transmembrane segment spans residues Leu-368 to Val-388. Residues Gly-389–Asn-390 lie on the Extracellular side of the membrane. Residues Asn-391 to Ala-411 form a helical membrane-spanning segment. Residues Asp-412–Asp-431 lie on the Cytoplasmic side of the membrane. A helical transmembrane segment spans residues Phe-432–Ile-452. The Extracellular segment spans residues Thr-453–Gln-462.

It belongs to the ZIP transporter (TC 2.A.5) family. Homodimer. N-glycosylated. N-glycosylation is not required for proper iron and zinc transport. As to expression, ubiquitously expressed.

The protein localises to the cell membrane. It is found in the apical cell membrane. The protein resides in the basolateral cell membrane. Its subcellular location is the lysosome membrane. The catalysed reaction is Zn(2+)(out) + 2 hydrogencarbonate(out) = Zn(2+)(in) + 2 hydrogencarbonate(in). The enzyme catalyses selenite(out) + Zn(2+)(out) + hydrogencarbonate(out) = selenite(in) + Zn(2+)(in) + hydrogencarbonate(in). It catalyses the reaction Mn(2+)(out) + 2 hydrogencarbonate(out) = Mn(2+)(in) + 2 hydrogencarbonate(in). It carries out the reaction Cd(2+)(out) + 2 hydrogencarbonate(out) = Cd(2+)(in) + 2 hydrogencarbonate(in). The catalysed reaction is Fe(2+)(out) + 2 hydrogencarbonate(out) = Fe(2+)(in) + 2 hydrogencarbonate(in). The enzyme catalyses Co(2+)(out) + 2 hydrogencarbonate(out) = Co(2+)(in) + 2 hydrogencarbonate(in). Functionally, electroneutral divalent metal cation:bicarbonate symporter of the plasma membrane mediating the cellular uptake of zinc and manganese, two divalent metal cations important for development, tissue homeostasis and immunity. Transports an electroneutral complex composed of a divalent metal cation and two bicarbonate anions or alternatively a bicarbonate and a selenite anion. Thereby, it also contributes to the cellular uptake of selenium, an essential trace metal and micronutrient. Also imports cadmium a non-essential metal which is cytotoxic and carcinogenic. May also transport iron and cobalt through membranes. Through zinc import, indirectly regulates the metal-dependent transcription factor MTF1 and the expression of some metalloproteases involved in cartilage catabolism and also probably heart development. Also indirectly regulates the expression of proteins involved in cell morphology and cytoskeleton organization. Indirectly controls innate immune function and inflammatory response by regulating zinc cellular uptake which in turn modulates the expression of genes specific of these processes. Protects, for instance, cells from injury and death at the onset of inflammation. By regulating zinc influx into monocytes also directly modulates their adhesion to endothelial cells and arteries. Reclaims manganese from the bile at the apical membrane of hepatocytes, thereby regulating the activity of the manganese-dependent enzymes through the systemic levels of the nutrient. Also participates in manganese reabsorption in the proximal tubule of the kidney. By mediating the extracellular uptake of manganese by cells of the blood-brain barrier, may also play a role in the transport of the micronutrient to the brain. With manganese cellular uptake also participates in mitochondrial proper function. Finally, also probably functions intracellularly, translocating zinc from lysosome to cytosol to indirectly enhance the expression of specific genes during TCR-mediated T cell activation. The chain is Metal cation symporter ZIP8 from Mus musculus (Mouse).